We begin with the raw amino-acid sequence, 173 residues long: MAQEKKQRVNEEISAPEVRLVGEDGEPLGIVSLNAALNAAEEAGLDLVEIAPMAQPPVCRVMDFGKFKYQEQKKAHEARLKQKQVQIKEVKLRPATDENDYQIKLRNLKRFLEEGDKCKVTLRFRGREMAHQEFGLRQLERVKADLEEIGQVEQMPKMEGRQMIMVISPKKNR.

Belongs to the IF-3 family. Monomer.

It is found in the cytoplasm. Its function is as follows. IF-3 binds to the 30S ribosomal subunit and shifts the equilibrium between 70S ribosomes and their 50S and 30S subunits in favor of the free subunits, thus enhancing the availability of 30S subunits on which protein synthesis initiation begins. The chain is Translation initiation factor IF-3 from Aromatoleum aromaticum (strain DSM 19018 / LMG 30748 / EbN1) (Azoarcus sp. (strain EbN1)).